We begin with the raw amino-acid sequence, 110 residues long: Large ribosomal subunit protein uL22 (110 aa).

The protein belongs to the universal ribosomal protein uL22 family. As to quaternary structure, part of the 50S ribosomal subunit.

Its function is as follows. This protein binds specifically to 23S rRNA; its binding is stimulated by other ribosomal proteins, e.g. L4, L17, and L20. It is important during the early stages of 50S assembly. It makes multiple contacts with different domains of the 23S rRNA in the assembled 50S subunit and ribosome. Functionally, the globular domain of the protein is located near the polypeptide exit tunnel on the outside of the subunit, while an extended beta-hairpin is found that lines the wall of the exit tunnel in the center of the 70S ribosome. The sequence is that of Large ribosomal subunit protein uL22 from Maridesulfovibrio salexigens (strain ATCC 14822 / DSM 2638 / NCIMB 8403 / VKM B-1763) (Desulfovibrio salexigens).